The primary structure comprises 455 residues: ATP-dependent protease ATPase subunit HslU (455 aa).

ATP is bound by residues I19, 61 to 66, D268, E333, and R405; that span reads GVGKTE.

Belongs to the ClpX chaperone family. HslU subfamily. As to quaternary structure, a double ring-shaped homohexamer of HslV is capped on each side by a ring-shaped HslU homohexamer. The assembly of the HslU/HslV complex is dependent on binding of ATP.

It is found in the cytoplasm. Functionally, ATPase subunit of a proteasome-like degradation complex; this subunit has chaperone activity. The binding of ATP and its subsequent hydrolysis by HslU are essential for unfolding of protein substrates subsequently hydrolyzed by HslV. HslU recognizes the N-terminal part of its protein substrates and unfolds these before they are guided to HslV for hydrolysis. The chain is ATP-dependent protease ATPase subunit HslU from Francisella philomiragia subsp. philomiragia (strain ATCC 25017 / CCUG 19701 / FSC 153 / O#319-036).